The sequence spans 209 residues: Abscisic acid receptor PYL5 (209 aa).

The START-like stretch occupies residues 44 to 196; the sequence is HAPGEHQCSS…NLTSLAEVSE (153 aa). Residues cysteine 51 and cysteine 177 are joined by a disulfide bond. Abscisate is bound by residues lysine 80, 109–114, 136–142, and glutamate 161; these read ATTSTE and RLRNYSS. The Gate loop motif lies at 105-109; the sequence is TGLPA. The Latch loop motif lies at 135–137; it reads HRL.

The protein belongs to the PYR/PYL/RCAR abscisic acid intracellular receptor family. As to quaternary structure, monomer. Interacts with PP2C30. Binding to PP2C30 is dependent on the presence of abscisic acid (ABA). Interacts with PP2C51. Binding to PP2C51 is dependent on the presence of ABA. Interacts with PP2C50. Binding to PP2C50 is dependent on the presence of ABA. Interacts with PP2C53. Expressed in leaf sheaths and leaf blades. Expressed at low levels in roots, flowers and seeds.

The protein resides in the nucleus. It localises to the cytoplasm. The protein localises to the cytosol. Its function is as follows. Intracellular abscisic acid (ABA) receptor that functions as a positive regulator of ABA signaling pathway. Together with ABI5, PP2C30 and SAPK2, is part of an ABA signaling unit that modulates seed germination and early seedling growth. Acts as a positive regulator of abiotic stress-responsive gene expression. Inhibits the protein phosphatases PP2C06 and PP2C09 when activated by ABA. The polypeptide is Abscisic acid receptor PYL5 (Oryza sativa subsp. japonica (Rice)).